Here is a 444-residue protein sequence, read N- to C-terminus: UDP-N-acetylmuramoylalanine--D-glutamate ligase (444 aa).

Gly-109–Thr-115 contacts ATP.

This sequence belongs to the MurCDEF family.

It localises to the cytoplasm. It catalyses the reaction UDP-N-acetyl-alpha-D-muramoyl-L-alanine + D-glutamate + ATP = UDP-N-acetyl-alpha-D-muramoyl-L-alanyl-D-glutamate + ADP + phosphate + H(+). It functions in the pathway cell wall biogenesis; peptidoglycan biosynthesis. Functionally, cell wall formation. Catalyzes the addition of glutamate to the nucleotide precursor UDP-N-acetylmuramoyl-L-alanine (UMA). This is UDP-N-acetylmuramoylalanine--D-glutamate ligase from Bacteroides thetaiotaomicron (strain ATCC 29148 / DSM 2079 / JCM 5827 / CCUG 10774 / NCTC 10582 / VPI-5482 / E50).